The sequence spans 251 residues: Pyrroloquinoline-quinone synthase (251 aa).

Belongs to the PqqC family.

The enzyme catalyses 6-(2-amino-2-carboxyethyl)-7,8-dioxo-1,2,3,4,7,8-hexahydroquinoline-2,4-dicarboxylate + 3 O2 = pyrroloquinoline quinone + 2 H2O2 + 2 H2O + H(+). The protein operates within cofactor biosynthesis; pyrroloquinoline quinone biosynthesis. Ring cyclization and eight-electron oxidation of 3a-(2-amino-2-carboxyethyl)-4,5-dioxo-4,5,6,7,8,9-hexahydroquinoline-7,9-dicarboxylic-acid to PQQ. The sequence is that of Pyrroloquinoline-quinone synthase from Pseudomonas putida (strain W619).